Consider the following 234-residue polypeptide: Phosphoribosylformylglycinamidine synthase subunit PurQ (234 aa).

The Glutamine amidotransferase type-1 domain maps to 4-234 (RIGVVTFPGS…TSILKKLVNA (231 aa)). Catalysis depends on C87, which acts as the Nucleophile. Residues H204 and E206 contribute to the active site.

In terms of assembly, part of the FGAM synthase complex composed of 1 PurL, 1 PurQ and 2 PurS subunits.

It is found in the cytoplasm. The catalysed reaction is N(2)-formyl-N(1)-(5-phospho-beta-D-ribosyl)glycinamide + L-glutamine + ATP + H2O = 2-formamido-N(1)-(5-O-phospho-beta-D-ribosyl)acetamidine + L-glutamate + ADP + phosphate + H(+). It catalyses the reaction L-glutamine + H2O = L-glutamate + NH4(+). The protein operates within purine metabolism; IMP biosynthesis via de novo pathway; 5-amino-1-(5-phospho-D-ribosyl)imidazole from N(2)-formyl-N(1)-(5-phospho-D-ribosyl)glycinamide: step 1/2. Its function is as follows. Part of the phosphoribosylformylglycinamidine synthase complex involved in the purines biosynthetic pathway. Catalyzes the ATP-dependent conversion of formylglycinamide ribonucleotide (FGAR) and glutamine to yield formylglycinamidine ribonucleotide (FGAM) and glutamate. The FGAM synthase complex is composed of three subunits. PurQ produces an ammonia molecule by converting glutamine to glutamate. PurL transfers the ammonia molecule to FGAR to form FGAM in an ATP-dependent manner. PurS interacts with PurQ and PurL and is thought to assist in the transfer of the ammonia molecule from PurQ to PurL. The chain is Phosphoribosylformylglycinamidine synthase subunit PurQ from Streptomyces avermitilis (strain ATCC 31267 / DSM 46492 / JCM 5070 / NBRC 14893 / NCIMB 12804 / NRRL 8165 / MA-4680).